The primary structure comprises 481 residues: GTPase Obg (481 aa).

An Obg domain is found at 2–159 (TTFVDRVVLH…LDAVLELKSV (158 aa)). One can recognise an OBG-type G domain in the interval 160 to 330 (ADIGLVGYPS…LMFAMGELVA (171 aa)). Residues 166–173 (GYPSAGKS), 191–195 (FTTLV), 212–215 (DVPG), 282–285 (NKID), and 311–313 (SAA) each bind GTP. Residues Ser173 and Thr193 each coordinate Mg(2+). The OCT domain occupies 348–426 (PKAVDDAGFT…IGEREFDWHP (79 aa)). The interval 440–481 (DQRLAEKTQRPSAAERLAARKARRQRPGDEPESDELDGDSGE) is disordered. The segment covering 469-481 (EPESDELDGDSGE) has biased composition (acidic residues).

Belongs to the TRAFAC class OBG-HflX-like GTPase superfamily. OBG GTPase family. In terms of assembly, monomer. Requires Mg(2+) as cofactor.

Its subcellular location is the cytoplasm. An essential GTPase which binds GTP, GDP and possibly (p)ppGpp with moderate affinity, with high nucleotide exchange rates and a fairly low GTP hydrolysis rate. Plays a role in control of the cell cycle, stress response, ribosome biogenesis and in those bacteria that undergo differentiation, in morphogenesis control. This Salinispora arenicola (strain CNS-205) protein is GTPase Obg.